Reading from the N-terminus, the 573-residue chain is E3 ubiquitin-protein ligase RNF168 (573 aa).

The RING-type zinc finger occupies 16–55; the sequence is CQICVEILFEPVTLPCNHTLCKPCFESTVEKASLCCPFCR. The residue at position 70 (Ser70) is a Phosphoserine. The LR motif 1 motif lies at 110-128; the sequence is LSKPGELRREYEEEISKVE. Residues 143 to 151 carry the UMI motif motif; sequence EEYIQKLLA. Disordered regions lie at residues 153 to 174 and 196 to 277; these read EEEE…QLKS and ASPL…EDMP. Residues 157–174 show a composition bias toward basic and acidic residues; that stretch reads EKRQAEKRHREMEEQLKS. The MIU motif 1 motif lies at 168–191; it reads MEEQLKSDEELARRLSLDINNFCE. At Ser197 the chain carries Phosphoserine. Lys210 is covalently cross-linked (Glycyl lysine isopeptide (Lys-Gly) (interchain with G-Cter in SUMO2)). The segment covering 231 to 243 has biased composition (polar residues); that stretch reads PKSQLGSASQSEV. The segment covering 245–261 has biased composition (basic and acidic residues); sequence QEDRKSSMSKKIDDNSD. Thr363 is subject to Phosphothreonine. Ser416 carries the phosphoserine modification. Positions 440–463 match the MIU motif 2 motif; it reads RHKQEKQDRLLALQLQEEVDQEQM. The interval 456-528 is disordered; that stretch reads EEVDQEQMRP…NHQQPSFKIQ (73 aa). The segment covering 461–470 has biased composition (basic and acidic residues); sequence EQMRPDRQKG. Residues 467–478 carry the LR motif 2 motif; that stretch reads RQKGSPDGYQLR. Ser471 is subject to Phosphoserine. The segment covering 494 to 519 has biased composition (basic and acidic residues); sequence NSRDRNSKRQTELEQPKPRTDSKNEN. Lys530 participates in a covalent cross-link: Glycyl lysine isopeptide (Lys-Gly) (interchain with G-Cter in SUMO2). A disordered region spans residues 540–573; the sequence is NSTNDNCNVSKTAHSLQPSKSQKSIFQMFQRVTK.

The protein belongs to the RNF168 family. As to quaternary structure, monomer. Interacts with UBE2N/UBC13. In terms of processing, sumoylated with SUMO1 by PIAS4 in response to double-strand breaks (DSBs). Post-translationally, ubiquitinated.

It localises to the nucleus. It catalyses the reaction S-ubiquitinyl-[E2 ubiquitin-conjugating enzyme]-L-cysteine + [acceptor protein]-L-lysine = [E2 ubiquitin-conjugating enzyme]-L-cysteine + N(6)-ubiquitinyl-[acceptor protein]-L-lysine.. Its pathway is protein modification; protein ubiquitination. Its function is as follows. E3 ubiquitin-protein ligase required for accumulation of repair proteins to sites of DNA damage. Acts with UBE2N/UBC13 to amplify the RNF8-dependent histone ubiquitination. Recruited to sites of DNA damage at double-strand breaks (DSBs) by binding to ubiquitinated histone H2A and H2AX and amplifies the RNF8-dependent H2A ubiquitination, promoting the formation of 'Lys-63'-linked ubiquitin conjugates. This leads to concentrate ubiquitinated histones H2A and H2AX at DNA lesions to the threshold required for recruitment of TP53BP1 and BRCA1. Also recruited at DNA interstrand cross-links (ICLs) sites and promotes accumulation of 'Lys-63'-linked ubiquitination of histones H2A and H2AX, leading to recruitment of FAAP20 and Fanconi anemia (FA) complex, followed by interstrand cross-link repair. H2A ubiquitination also mediates the ATM-dependent transcriptional silencing at regions flanking DSBs in cis, a mechanism to avoid collision between transcription and repair intermediates. Also involved in class switch recombination in immune system, via its role in regulation of DSBs repair. Following DNA damage, promotes the ubiquitination and degradation of JMJD2A/KDM4A in collaboration with RNF8, leading to unmask H4K20me2 mark and promote the recruitment of TP53BP1 at DNA damage sites. Not able to initiate 'Lys-63'-linked ubiquitination in vitro; possibly due to partial occlusion of the UBE2N/UBC13-binding region. Catalyzes monoubiquitination of 'Lys-13' and 'Lys-15' of nucleosomal histone H2A (H2AK13Ub and H2AK15Ub, respectively). The polypeptide is E3 ubiquitin-protein ligase RNF168 (Bos taurus (Bovine)).